The sequence spans 830 residues: WD repeat-containing protein 75 (830 aa).

WD repeat units lie at residues 4–42, 46–85, 89–130, 144–183, 192–230, 236–275, 278–317, 323–361, and 375–422; these read EGVR…KVYS, EECV…KLWD, GILI…QLVS, RQLT…YFFK, LPST…RLWR, QKYT…VEWR, SEKN…TVIH, SAVI…QFYS, and QQEY…KLWN. Residue K426 forms a Glycyl lysine isopeptide (Lys-Gly) (interchain with G-Cter in SUMO2) linkage. WD repeat units follow at residues 429 to 473, 486 to 524, 528 to 568, and 573 to 610; these read GFVL…KVWI, AWTC…TIWD, WELK…CCWN, and SIQW…FVFK. A phosphoserine mark is found at S663 and S671. Residue K675 forms a Glycyl lysine isopeptide (Lys-Gly) (interchain with G-Cter in SUMO2) linkage. The interval 761 to 807 is disordered; that stretch reads KSAEEVPDDVDMEGNKESDDSDEEYDLTEKDKETNNNTDLGEDAIHQ. 2 positions are modified to phosphoserine: S778 and S781. At Y785 the chain carries Phosphotyrosine. The residue at position 811 (S811) is a Phosphoserine.

As to quaternary structure, component of the proposed t-UTP subcomplex of the ribosomal small subunit (SSU) processome. SSU processome is composed of more than 70 proteins and the RNA chaperone small nucleolar RNA (snoRNA) U3.

It is found in the nucleus. Its subcellular location is the nucleolus. Its function is as follows. Ribosome biogenesis factor. Part of the small subunit (SSU) processome, first precursor of the small eukaryotic ribosomal subunit. During the assembly of the SSU processome in the nucleolus, many ribosome biogenesis factors, an RNA chaperone and ribosomal proteins associate with the nascent pre-rRNA and work in concert to generate RNA folding, modifications, rearrangements and cleavage as well as targeted degradation of pre-ribosomal RNA by the RNA exosome. Involved in nucleolar processing of pre-18S ribosomal RNA. Required for optimal pre-ribosomal RNA transcription by RNA polymerase I. This chain is WD repeat-containing protein 75 (Wdr75), found in Mus musculus (Mouse).